The following is a 317-amino-acid chain: UV DNA damage endonuclease (317 aa).

Belongs to the uve1/UvsE family.

Its function is as follows. Component in a DNA repair pathway. Removal of UV LIGHT damaged nucleotides. Recognizes pyrimidine dimers and cleave a phosphodiester bond immediately 5' to the lesion. In Bacillus anthracis (strain A0248), this protein is UV DNA damage endonuclease.